The following is a 249-amino-acid chain: 5'-nucleotidase SurE (249 aa).

4 residues coordinate a divalent metal cation: D9, D10, S40, and N92.

It belongs to the SurE nucleotidase family. It depends on a divalent metal cation as a cofactor.

Its subcellular location is the cytoplasm. It carries out the reaction a ribonucleoside 5'-phosphate + H2O = a ribonucleoside + phosphate. Its function is as follows. Nucleotidase that shows phosphatase activity on nucleoside 5'-monophosphates. This Shewanella baltica (strain OS195) protein is 5'-nucleotidase SurE.